A 176-amino-acid chain; its full sequence is Flavodoxin 1 (176 aa).

A Flavodoxin-like domain is found at 4–165; sequence TGIFFGSDTG…RVEKWVKQIS (162 aa).

The protein belongs to the flavodoxin family. FMN serves as cofactor.

Functionally, low-potential electron donor to a number of redox enzymes (Potential). Involved in the reactivation of inactive cob(II)alamin in methionine synthase. This chain is Flavodoxin 1 (fldA), found in Escherichia coli O157:H7.